The chain runs to 201 residues: FMN-dependent NADH:quinone oxidoreductase (201 aa).

Residue 92 to 95 participates in FMN binding; sequence MWNL.

Belongs to the azoreductase type 1 family. In terms of assembly, homodimer. FMN is required as a cofactor.

It catalyses the reaction 2 a quinone + NADH + H(+) = 2 a 1,4-benzosemiquinone + NAD(+). The catalysed reaction is N,N-dimethyl-1,4-phenylenediamine + anthranilate + 2 NAD(+) = 2-(4-dimethylaminophenyl)diazenylbenzoate + 2 NADH + 2 H(+). Functionally, quinone reductase that provides resistance to thiol-specific stress caused by electrophilic quinones. Its function is as follows. Also exhibits azoreductase activity. Catalyzes the reductive cleavage of the azo bond in aromatic azo compounds to the corresponding amines. The polypeptide is FMN-dependent NADH:quinone oxidoreductase (Caldicellulosiruptor bescii (strain ATCC BAA-1888 / DSM 6725 / KCTC 15123 / Z-1320) (Anaerocellum thermophilum)).